The following is a 442-amino-acid chain: UDP-N-acetylmuramate--L-alanine ligase (442 aa).

109 to 115 is an ATP binding site; it reads GAHGKTS.

It belongs to the MurCDEF family.

It is found in the cytoplasm. The enzyme catalyses UDP-N-acetyl-alpha-D-muramate + L-alanine + ATP = UDP-N-acetyl-alpha-D-muramoyl-L-alanine + ADP + phosphate + H(+). Its pathway is cell wall biogenesis; peptidoglycan biosynthesis. In terms of biological role, cell wall formation. This is UDP-N-acetylmuramate--L-alanine ligase from Streptococcus pyogenes serotype M49 (strain NZ131).